A 166-amino-acid chain; its full sequence is Regulatory protein RecX (166 aa).

The protein belongs to the RecX family.

The protein localises to the cytoplasm. Its function is as follows. Modulates RecA activity. The sequence is that of Regulatory protein RecX from Klebsiella pneumoniae subsp. pneumoniae (strain ATCC 700721 / MGH 78578).